Here is a 306-residue protein sequence, read N- to C-terminus: D-alanine--D-alanine ligase B (306 aa).

The region spanning 101 to 303 (KLLWQGAGLP…FSQLVVRILE (203 aa)) is the ATP-grasp domain. Residue 134–189 (ISALGLPLIVKPSREGSSVGMTKVVEENALQGALSLAFQHDDEILIEKWLCGPEFT) coordinates ATP. Mg(2+)-binding residues include Asp257, Glu270, and Asn272.

It belongs to the D-alanine--D-alanine ligase family. Monomer. Mg(2+) serves as cofactor. Mn(2+) is required as a cofactor.

It localises to the cytoplasm. The enzyme catalyses 2 D-alanine + ATP = D-alanyl-D-alanine + ADP + phosphate + H(+). Its pathway is cell wall biogenesis; peptidoglycan biosynthesis. In terms of biological role, cell wall formation. The chain is D-alanine--D-alanine ligase B (ddlB) from Salmonella typhimurium (strain LT2 / SGSC1412 / ATCC 700720).